A 228-amino-acid chain; its full sequence is Interleukin-27 subunit beta (228 aa).

Positions 1–18 are cleaved as a signal peptide; that stretch reads MSKLLFLSLALWASRSPG. Fibronectin type-III domains lie at 26–124 and 127–224; these read ALSQ…VAER and KPDP…VESA. 2 N-linked (GlcNAc...) asparagine glycosylation sites follow: N54 and N104.

This sequence belongs to the type I cytokine receptor family. Type 3 subfamily. As to quaternary structure, heterodimer with IL27/IL27A; not disulfide-linked. This heterodimer is known as interleukin IL-27. Heterodimer with IL12A; not disulfide-linked. This heterodimer is known as interleukin IL-35. Interacts with SQSTM1.

It localises to the secreted. Functionally, associates with IL27 to form the IL-27 interleukin, a heterodimeric cytokine which functions in innate immunity. IL-27 has pro- and anti-inflammatory properties, that can regulate T-helper cell development, suppress T-cell proliferation, stimulate cytotoxic T-cell activity, induce isotype switching in B-cells, and that has diverse effects on innate immune cells. Among its target cells are CD4 T-helper cells which can differentiate in type 1 effector cells (TH1), type 2 effector cells (TH2) and IL17 producing helper T-cells (TH17). It drives rapid clonal expansion of naive but not memory CD4 T-cells. It also strongly synergizes with IL-12 to trigger interferon-gamma/IFN-gamma production of naive CD4 T-cells, binds to the cytokine receptor WSX-1/TCCR. Another important role of IL-27 is its antitumor activity as well as its antiangiogenic activity with activation of production of antiangiogenic chemokines. The protein is Interleukin-27 subunit beta (Ebi3) of Mus musculus (Mouse).